A 367-amino-acid chain; its full sequence is Ribosomal lysine N-methyltransferase 5 (367 aa).

The tract at residues 55 to 74 (EGGRKKKRVRRRNKASSVEE) is disordered. Basic residues predominate over residues 58 to 68 (RKKKRVRRRNK). S-adenosyl-L-methionine-binding positions include Trp-110, 170 to 172 (GAG), Asp-192, Trp-256, and Met-288.

The protein belongs to the class I-like SAM-binding methyltransferase superfamily. RKM5 family.

Its function is as follows. S-adenosyl-L-methionine-dependent protein-lysine N-methyltransferase that monomethylates 60S ribosomal protein L1 (RPL1A and RPL1B) at 'Lys-46'. The chain is Ribosomal lysine N-methyltransferase 5 (RKM5) from Saccharomyces cerevisiae (strain RM11-1a) (Baker's yeast).